We begin with the raw amino-acid sequence, 322 residues long: Transmembrane protein 171 (322 aa).

Transmembrane regions (helical) follow at residues 22–42 (IFFL…LSIF), 57–77 (IVLK…VILA), 112–132 (LIFG…GIWV), and 159–179 (FLSL…FFVV). Positions 223 to 322 (PPPYFPESSA…LGAPSDASPP (100 aa)) are disordered. Residues 228 to 241 (PESSAAAPSPGANS) show a composition bias toward low complexity. Polar residues-rich tracts occupy residues 242-267 (LHQI…NQGA) and 279-289 (ISGQGSSSERS).

It is found in the membrane. The protein is Transmembrane protein 171 (Tmem171) of Mus musculus (Mouse).